The sequence spans 33 residues: Brevinin-2DYc (33 aa).

A disulfide bridge connects residues Cys-27 and Cys-33.

As to expression, expressed by the skin glands.

It is found in the secreted. Functionally, antimicrobial peptide. A mixture of Brevinin-2DYc/2DYd is active against the Gram-positive bacterium S.aureus (MIC=15 uM) and the Gram-negative bacterium E.coli (MIC=15 uM). The chain is Brevinin-2DYc from Rana dybowskii (Dybovsky's frog).